We begin with the raw amino-acid sequence, 62 residues long: Short neurotoxin 1 (62 aa).

Polar residues predominate over residues 1-16; sequence LECHNQQSIQTPTTTG. Positions 1–20 are disordered; it reads LECHNQQSIQTPTTTGCSGG. 4 disulfide bridges follow: C3–C24, C17–C41, C43–C54, and C55–C60.

This sequence belongs to the three-finger toxin family. Short-chain subfamily. Type I alpha-neurotoxin sub-subfamily. In terms of tissue distribution, expressed by the venom gland.

The protein localises to the secreted. In terms of biological role, binds to muscle nicotinic acetylcholine receptor (nAChR) and inhibit acetylcholine from binding to the receptor, thereby impairing neuromuscular transmission. This is Short neurotoxin 1 from Naja kaouthia (Monocled cobra).